The sequence spans 436 residues: Tol-Pal system protein TolB (436 aa).

The N-terminal stretch at 1-28 (MEMLRRNFFRLLMVLVAGCGLIASPANA) is a signal peptide.

The protein belongs to the TolB family. As to quaternary structure, the Tol-Pal system is composed of five core proteins: the inner membrane proteins TolA, TolQ and TolR, the periplasmic protein TolB and the outer membrane protein Pal. They form a network linking the inner and outer membranes and the peptidoglycan layer.

The protein resides in the periplasm. Functionally, part of the Tol-Pal system, which plays a role in outer membrane invagination during cell division and is important for maintaining outer membrane integrity. The chain is Tol-Pal system protein TolB from Rhizobium meliloti (strain 1021) (Ensifer meliloti).